The following is a 417-amino-acid chain: Gamma-glutamyl phosphate reductase (417 aa).

Belongs to the gamma-glutamyl phosphate reductase family.

The protein localises to the cytoplasm. The catalysed reaction is L-glutamate 5-semialdehyde + phosphate + NADP(+) = L-glutamyl 5-phosphate + NADPH + H(+). It functions in the pathway amino-acid biosynthesis; L-proline biosynthesis; L-glutamate 5-semialdehyde from L-glutamate: step 2/2. In terms of biological role, catalyzes the NADPH-dependent reduction of L-glutamate 5-phosphate into L-glutamate 5-semialdehyde and phosphate. The product spontaneously undergoes cyclization to form 1-pyrroline-5-carboxylate. The polypeptide is Gamma-glutamyl phosphate reductase (Polynucleobacter asymbioticus (strain DSM 18221 / CIP 109841 / QLW-P1DMWA-1) (Polynucleobacter necessarius subsp. asymbioticus)).